The following is a 691-amino-acid chain: Protein-glutamine gamma-glutamyltransferase E (691 aa).

At Tyr-110 the chain carries Phosphotyrosine. Thr-111 bears the Phosphothreonine mark. Ca(2+) contacts are provided by Ala-221, Asn-224, Asn-226, and Asp-227. Residue Cys-272 is part of the active site. Residues Asp-301, Asp-303, Asn-305, Ser-307, and Asp-324 each coordinate Ca(2+). Active-site residues include His-330 and Asp-353. Positions 393, 414, 442, and 447 each coordinate Ca(2+).

It belongs to the transglutaminase superfamily. Transglutaminase family. As to quaternary structure, consists of two polypeptide chains, which are synthesized as a precursor form of a single polypeptide. Ca(2+) serves as cofactor. In terms of processing, activated by proteolytic processing. In vitro activation is commonly achieved by cleavage with dispase, a neutral bacterial protease. Physiological activation may be catalyzed by CTSL and, to a lesser extent, by CTSS.

Its subcellular location is the cytoplasm. The catalysed reaction is L-glutaminyl-[protein] + L-lysyl-[protein] = [protein]-L-lysyl-N(6)-5-L-glutamyl-[protein] + NH4(+). Catalyzes the calcium-dependent formation of isopeptide cross-links between glutamine and lysine residues in various proteins, as well as the conjugation of polyamines to proteins. Involved in the formation of the cornified envelope (CE), a specialized component consisting of covalent cross-links of proteins beneath the plasma membrane of terminally differentiated keratinocytes. Catalyzes small proline-rich proteins and LOR cross-linking to form small interchain oligomers, which are further cross-linked by TGM1 onto the growing CE scaffold. In hair follicles, involved in cross-linking structural proteins to hardening the inner root sheath. The protein is Protein-glutamine gamma-glutamyltransferase E (TGM3) of Bos taurus (Bovine).